The following is a 221-amino-acid chain: Endo-1,4-beta-xylanase 11A (221 aa).

Positions 1-17 are cleaved as a signal peptide; it reads MVSFTTLLTAVATAVSA. The region spanning 28–218 is the GH11 domain; the sequence is RGIQPGTGVH…SSGSAEIEVR (191 aa). N-linked (GlcNAc...) asparagine glycosylation is present at N89. The active-site Nucleophile is the E113. Catalysis depends on E205, which acts as the Proton donor.

It belongs to the glycosyl hydrolase 11 (cellulase G) family.

It localises to the secreted. It carries out the reaction Endohydrolysis of (1-&gt;4)-beta-D-xylosidic linkages in xylans.. The protein operates within glycan degradation; xylan degradation. With respect to regulation, retains an activity of 52.5% in the presence of 5 mM SDS. Functionally, endo-1,4-beta-xylanase involved in the hydrolysis of xylan, a major structural heterogeneous polysaccharide found in plant biomass representing the second most abundant polysaccharide in the biosphere, after cellulose. Is an alkali-tolerant enzyme, exhibiting 50.6% of activity at pH 9.0, and 26.9% even at pH 10.0. In Humicola insolens (Soft-rot fungus), this protein is Endo-1,4-beta-xylanase 11A.